The following is a 417-amino-acid chain: Putative UDP-arabinose 4-epimerase 2 (417 aa).

At M1–N31 the chain is on the cytoplasmic side. A helical; Signal-anchor for type II membrane protein transmembrane segment spans residues Y32–P54. Residues T55–Y417 lie on the Lumenal side of the membrane. An NAD(+)-binding site is contributed by H71–L102. Y219 functions as the Proton acceptor in the catalytic mechanism.

Belongs to the NAD(P)-dependent epimerase/dehydratase family. NAD(+) is required as a cofactor.

Its subcellular location is the golgi apparatus. It is found in the golgi stack membrane. It catalyses the reaction UDP-beta-L-arabinopyranose = UDP-alpha-D-xylose. It participates in nucleotide-sugar biosynthesis; UDP-L-arabinose biosynthesis; UDP-L-arabinose from UDP-alpha-D-xylose: step 1/1. Its pathway is cell wall biogenesis; cell wall polysaccharide biosynthesis. The polypeptide is Putative UDP-arabinose 4-epimerase 2 (Arabidopsis thaliana (Mouse-ear cress)).